A 556-amino-acid polypeptide reads, in one-letter code: Urocanate hydratase (556 aa).

NAD(+) contacts are provided by residues 52 to 53 (GG), Gln130, 176 to 178 (GMG), Glu196, Arg201, 242 to 243 (NA), 263 to 267 (QTSAH), 273 to 274 (YL), and Tyr322. Residue Cys410 is part of the active site. Gly492 provides a ligand contact to NAD(+).

This sequence belongs to the urocanase family. It depends on NAD(+) as a cofactor.

It localises to the cytoplasm. The catalysed reaction is 4-imidazolone-5-propanoate = trans-urocanate + H2O. It participates in amino-acid degradation; L-histidine degradation into L-glutamate; N-formimidoyl-L-glutamate from L-histidine: step 2/3. Catalyzes the conversion of urocanate to 4-imidazolone-5-propionate. The sequence is that of Urocanate hydratase from Shewanella sediminis (strain HAW-EB3).